The following is a 62-amino-acid chain: Photosystem II reaction center protein Z (62 aa).

A run of 2 helical transmembrane segments spans residues 8–28 (AVFA…AVFA) and 41–61 (FSGA…NSSV).

Belongs to the PsbZ family. As to quaternary structure, PSII is composed of 1 copy each of membrane proteins PsbA, PsbB, PsbC, PsbD, PsbE, PsbF, PsbH, PsbI, PsbJ, PsbK, PsbL, PsbM, PsbT, PsbY, PsbZ, Psb30/Ycf12, at least 3 peripheral proteins of the oxygen-evolving complex and a large number of cofactors. It forms dimeric complexes.

It localises to the plastid. The protein resides in the chloroplast thylakoid membrane. Functionally, may control the interaction of photosystem II (PSII) cores with the light-harvesting antenna, regulates electron flow through the 2 photosystem reaction centers. PSII is a light-driven water plastoquinone oxidoreductase, using light energy to abstract electrons from H(2)O, generating a proton gradient subsequently used for ATP formation. The polypeptide is Photosystem II reaction center protein Z (Selaginella uncinata (Blue spike-moss)).